A 59-amino-acid chain; its full sequence is Large ribosomal subunit protein bL32 (59 aa).

Positions 1–20 (MAVQKNKPTRSKRGMRRSHD) are disordered. Positions 7-19 (KPTRSKRGMRRSH) are enriched in basic residues.

The protein belongs to the bacterial ribosomal protein bL32 family.

The protein is Large ribosomal subunit protein bL32 of Wigglesworthia glossinidia brevipalpis.